A 345-amino-acid polypeptide reads, in one-letter code: Very-long-chain 3-oxoacyl-CoA reductase (345 aa).

The helical transmembrane segment at 26–46 threads the bilayer; that stretch reads GAAVLLATGGLFLASRVLTFV. Val71, Asp125, Asp133, Asn152, Tyr219, Lys223, Ile252, and Ser254 together coordinate NADP(+). The active-site Proton donor is Tyr219. The active-site Lowers pKa of active site Tyr is the Lys223.

This sequence belongs to the short-chain dehydrogenases/reductases (SDR) family.

The protein resides in the endoplasmic reticulum membrane. It catalyses the reaction a very-long-chain (3R)-3-hydroxyacyl-CoA + NADP(+) = a very-long-chain 3-oxoacyl-CoA + NADPH + H(+). It participates in lipid metabolism; fatty acid biosynthesis. Functionally, component of the microsomal membrane bound fatty acid elongation system, which produces the 26-carbon very long-chain fatty acids (VLCFA) from palmitate. Catalyzes the reduction of the 3-ketoacyl-CoA intermediate that is formed in each cycle of fatty acid elongation. VLCFAs serve as precursors for ceramide and sphingolipids. This Aspergillus clavatus (strain ATCC 1007 / CBS 513.65 / DSM 816 / NCTC 3887 / NRRL 1 / QM 1276 / 107) protein is Very-long-chain 3-oxoacyl-CoA reductase.